Consider the following 67-residue polypeptide: Conotoxin AbVIN (67 aa).

Residues 1–17 (VIIIAVLFLTACQLIAT) form the signal peptide. The propeptide occupies 18 to 40 (ASYARSERKHPDLRLSSRNSKLS). Cystine bridges form between C43–C57, C50–C61, and C56–C66.

It belongs to the conotoxin O1 superfamily. In terms of tissue distribution, expressed by the venom duct.

It localises to the secreted. The chain is Conotoxin AbVIN from Conus abbreviatus (Abbreviated cone).